Consider the following 160-residue polypeptide: Endoribonuclease YbeY (160 aa).

The Zn(2+) site is built by His111, His115, and His121.

Belongs to the endoribonuclease YbeY family. Zn(2+) serves as cofactor.

The protein localises to the cytoplasm. Its function is as follows. Single strand-specific metallo-endoribonuclease involved in late-stage 70S ribosome quality control and in maturation of the 3' terminus of the 16S rRNA. This chain is Endoribonuclease YbeY, found in Stutzerimonas stutzeri (strain A1501) (Pseudomonas stutzeri).